A 273-amino-acid polypeptide reads, in one-letter code: Phosphate import ATP-binding protein PstB (273 aa).

An ABC transporter domain is found at 17-259 (LSAENLSIFY…DKTNNIFQNP (243 aa)). 49–56 (GPSGCGKS) is a binding site for ATP.

Belongs to the ABC transporter superfamily. Phosphate importer (TC 3.A.1.7) family. The complex is composed of two ATP-binding proteins (PstB), two transmembrane proteins (PstC and PstA) and a solute-binding protein (PstS).

It is found in the cell inner membrane. The catalysed reaction is phosphate(out) + ATP + H2O = ADP + 2 phosphate(in) + H(+). Its function is as follows. Part of the ABC transporter complex PstSACB involved in phosphate import. Responsible for energy coupling to the transport system. The polypeptide is Phosphate import ATP-binding protein PstB (Trichodesmium erythraeum (strain IMS101)).